We begin with the raw amino-acid sequence, 600 residues long: Methylenetetrahydrofolate reductase 2 (600 aa).

E22 functions as the Proton donor/acceptor in the catalytic mechanism. NAD(+) contacts are provided by residues 22 to 27 and 54 to 55; these read EYFVPK and TW. FAD-binding positions include 54 to 55, H84, 114 to 116, 133 to 134, Y156, D171, and K178; these read TW, RGD, and YA. D116 contacts substrate. Positions 189 and 282 each coordinate substrate.

This sequence belongs to the methylenetetrahydrofolate reductase family. Requires FAD as cofactor.

It catalyses the reaction (6S)-5-methyl-5,6,7,8-tetrahydrofolate + NADP(+) = (6R)-5,10-methylene-5,6,7,8-tetrahydrofolate + NADPH + H(+). Its pathway is one-carbon metabolism; tetrahydrofolate interconversion. This chain is Methylenetetrahydrofolate reductase 2 (MET13), found in Saccharomyces cerevisiae (strain ATCC 204508 / S288c) (Baker's yeast).